The sequence spans 316 residues: MLEQPYLDLAQKVLDEGHFKPDRTHTGTYSIFGHQMRFDLSKGFPLLTTKKVPFGLIKSELLWFLRGDTNIRFLLQHKNHIWDEWAFEKWVASPDYHGPDMTDFGHRSQKDPEFAASYREQMAKFDERILTDESFAAKYGDLGLVYGSQWRAWHTSRGDTIDQLGDVIEQIKTHPYSRRLIVSAWNPEDVPTMALPPCHTLFQFYVNDGKLSLQLYQRSADIFLGVPFNIASYALLTHLVAHECGLQVGDFIHTFGDAHLYVNHLDQIKEQLTRTPRQAPTLVLNPDKHDIFDFDMQDIKLLNYDPYPAIKAPVAV.

DUMP-binding positions include Arg-23 and Arg-178–Arg-179. The active-site Nucleophile is the Cys-198. DUMP contacts are provided by residues Arg-218–Asp-221, Asn-229, and His-259–Tyr-261. (6R)-5,10-methylene-5,6,7,8-tetrahydrofolate is bound at residue Asp-221. Ala-315 is a (6R)-5,10-methylene-5,6,7,8-tetrahydrofolate binding site.

Belongs to the thymidylate synthase family. Bacterial-type ThyA subfamily. Homodimer.

The protein localises to the cytoplasm. The enzyme catalyses dUMP + (6R)-5,10-methylene-5,6,7,8-tetrahydrofolate = 7,8-dihydrofolate + dTMP. Its pathway is pyrimidine metabolism; dTTP biosynthesis. In terms of biological role, catalyzes the reductive methylation of 2'-deoxyuridine-5'-monophosphate (dUMP) to 2'-deoxythymidine-5'-monophosphate (dTMP) while utilizing 5,10-methylenetetrahydrofolate (mTHF) as the methyl donor and reductant in the reaction, yielding dihydrofolate (DHF) as a by-product. This enzymatic reaction provides an intracellular de novo source of dTMP, an essential precursor for DNA biosynthesis. The sequence is that of Thymidylate synthase from Lacticaseibacillus paracasei (strain ATCC 334 / BCRC 17002 / CCUG 31169 / CIP 107868 / KCTC 3260 / NRRL B-441) (Lactobacillus paracasei).